The primary structure comprises 349 residues: Phosphoribosylformylglycinamidine cyclo-ligase (349 aa).

Belongs to the AIR synthase family.

It is found in the cytoplasm. The catalysed reaction is 2-formamido-N(1)-(5-O-phospho-beta-D-ribosyl)acetamidine + ATP = 5-amino-1-(5-phospho-beta-D-ribosyl)imidazole + ADP + phosphate + H(+). It functions in the pathway purine metabolism; IMP biosynthesis via de novo pathway; 5-amino-1-(5-phospho-D-ribosyl)imidazole from N(2)-formyl-N(1)-(5-phospho-D-ribosyl)glycinamide: step 2/2. In Listeria monocytogenes serotype 4b (strain CLIP80459), this protein is Phosphoribosylformylglycinamidine cyclo-ligase.